Here is a 451-residue protein sequence, read N- to C-terminus: TERF1-interacting nuclear factor 2 (451 aa).

An N-acetylalanine modification is found at alanine 2. A disordered region spans residues 229 to 257 (NPLPKAKPGTHLPQGPSSRTHPEPLAGRH). Positions 256 to 278 (RHFNLAPLGRRRVQSQWASTRGG) match the TBM motif. Residues 262–268 (PLGRRRV) carry the Nuclear localization signal motif. Serine 295 carries the post-translational modification Phosphoserine. Glycyl lysine isopeptide (Lys-Gly) (interchain with G-Cter in SUMO2) cross-links involve residues lysine 302, lysine 306, lysine 341, and lysine 353.

As to quaternary structure, monomer. Found in a complex with POT1; TERF1 and TNKS1. Component of the shelterin complex (telosome) composed of TERF1, TERF2, TINF2, TERF2IP ACD and POT1. Interacts with TERF1, TERF2 and ACD. As to expression, detected in heart, brain, placenta, lung, liver, skeletal muscle, kidney and pancreas.

It localises to the nucleus. The protein localises to the chromosome. It is found in the telomere. The protein resides in the nucleus matrix. In terms of biological role, component of the shelterin complex (telosome) that is involved in the regulation of telomere length and protection. Shelterin associates with arrays of double-stranded TTAGGG repeats added by telomerase and protects chromosome ends; without its protective activity, telomeres are no longer hidden from the DNA damage surveillance and chromosome ends are inappropriately processed by DNA repair pathways. Plays a role in shelterin complex assembly. Isoform 1 may have additional role in tethering telomeres to the nuclear matrix. The sequence is that of TERF1-interacting nuclear factor 2 (TINF2) from Homo sapiens (Human).